The chain runs to 196 residues: dTTP/UTP pyrophosphatase (196 aa).

D73 serves as the catalytic Proton acceptor.

Belongs to the Maf family. YhdE subfamily. The cofactor is a divalent metal cation.

It is found in the cytoplasm. It carries out the reaction dTTP + H2O = dTMP + diphosphate + H(+). The catalysed reaction is UTP + H2O = UMP + diphosphate + H(+). Its function is as follows. Nucleoside triphosphate pyrophosphatase that hydrolyzes dTTP and UTP. May have a dual role in cell division arrest and in preventing the incorporation of modified nucleotides into cellular nucleic acids. This chain is dTTP/UTP pyrophosphatase, found in Myxococcus xanthus (strain DK1622).